Here is a 410-residue protein sequence, read N- to C-terminus: Phthiocerol/phthiodiolone dimycocerosyl transferase (410 aa).

Residue His-118 is the Proton acceptor of the active site.

Belongs to the acyltransferase PapA5 family. Monomer. Interacts directly with the acyl carrier protein (ACP) domain of the mycocerosic acid synthase (mas) protein.

It carries out the reaction 2 a mycocerosyl-[mycocerosic acid synthase] + a phthiocerol = a dimycocerosyl phthiocerol + 2 holo-[mycocerosic acid synthase].. The catalysed reaction is 2 a mycocerosyl-[mycocerosic acid synthase] + a phthiodiolone = a dimycocerosyl phthiodiolone + 2 holo-[mycocerosic acid synthase].. The enzyme catalyses 2 a mycocerosyl-[mycocerosic acid synthase] + a phenolphthiocerol = a dimycocerosyl phenolphthiocerol + 2 holo-[mycocerosic acid synthase].. Functionally, catalyzes diesterification of phthiocerol, phthiodiolone, and phenolphthiocerol with mycocerosic acids, the final step in the phthiocerol, phthiodiolone and phenolphthiocerol dimycocerosate esters (PDIM) synthesis. Can directly transfer the mycocerosate bound to the mycocerosic acid synthase (mas) onto the substrate alcohols. This is Phthiocerol/phthiodiolone dimycocerosyl transferase (papA5) from Mycobacterium sp. (strain JLS).